We begin with the raw amino-acid sequence, 279 residues long: MMQILCECCNSDHRSSSTPMATTTSSSASDPAAISPTPSQQHASSTVKTLDDRRPAGTSSSAGETEPKAAVEPQEYPRRPGVPDCSYYVEFGSCKFGMRCLYNHPAKHAGGCDKLEHPQRPGEHDCLHYLRFGRCKYGMNCRFNHPPDRLPQQQVYFPWKACHCHHSEGKSEAEHVKLNFLGLPLRPGTGLCSYYMNRGICKFGSNCKFHHPNSGSGHEKWDGSLQTNQISSGVNIYSVLDHGELNEQPVPSKDDFQVSFVQNIVGFNFYIWCDPELAP.

A disordered region spans residues 11–77 (SDHRSSSTPM…KAAVEPQEYP (67 aa)). The span at 16–39 (SSTPMATTTSSSASDPAAISPTPS) shows a compositional bias: low complexity. C3H1-type zinc fingers lie at residues 79–107 (RPGV…HPAK), 120–148 (RPGE…HPPD), and 186–214 (RPGT…HPNS).

The sequence is that of Zinc finger CCCH domain-containing protein 42 from Oryza sativa subsp. japonica (Rice).